A 599-amino-acid chain; its full sequence is Adenine deaminase (599 aa).

Belongs to the metallo-dependent hydrolases superfamily. Adenine deaminase family. It depends on Mn(2+) as a cofactor.

It catalyses the reaction adenine + H2O + H(+) = hypoxanthine + NH4(+). The sequence is that of Adenine deaminase from Clostridium botulinum (strain Loch Maree / Type A3).